We begin with the raw amino-acid sequence, 29 residues long: uncharacterized protein (29 aa).

The interval 1-29 is disordered; sequence MFKMKFGDTLPRSDFGTGGNKQAPGLELG.

This is an uncharacterized protein from Saccharomyces cerevisiae (strain ATCC 204508 / S288c) (Baker's yeast).